Reading from the N-terminus, the 154-residue chain is 3-hydroxyacyl-[acyl-carrier-protein] dehydratase FabZ (154 aa).

His60 is a catalytic residue.

The protein belongs to the thioester dehydratase family. FabZ subfamily.

The protein localises to the cytoplasm. The enzyme catalyses a (3R)-hydroxyacyl-[ACP] = a (2E)-enoyl-[ACP] + H2O. In terms of biological role, involved in unsaturated fatty acids biosynthesis. Catalyzes the dehydration of short chain beta-hydroxyacyl-ACPs and long chain saturated and unsaturated beta-hydroxyacyl-ACPs. In Haemophilus ducreyi (strain 35000HP / ATCC 700724), this protein is 3-hydroxyacyl-[acyl-carrier-protein] dehydratase FabZ.